We begin with the raw amino-acid sequence, 218 residues long: Octanoyltransferase (218 aa).

Residues 31-207 (AQTPDELWLL…QLAAQLGYAE (177 aa)) form the BPL/LPL catalytic domain. Substrate-binding positions include 70-77 (RGGQVTYH), 137-139 (SLG), and 150-152 (GLA). Cysteine 168 functions as the Acyl-thioester intermediate in the catalytic mechanism.

This sequence belongs to the LipB family.

The protein localises to the cytoplasm. It catalyses the reaction octanoyl-[ACP] + L-lysyl-[protein] = N(6)-octanoyl-L-lysyl-[protein] + holo-[ACP] + H(+). It participates in protein modification; protein lipoylation via endogenous pathway; protein N(6)-(lipoyl)lysine from octanoyl-[acyl-carrier-protein]: step 1/2. Functionally, catalyzes the transfer of endogenously produced octanoic acid from octanoyl-acyl-carrier-protein onto the lipoyl domains of lipoate-dependent enzymes. Lipoyl-ACP can also act as a substrate although octanoyl-ACP is likely to be the physiological substrate. The polypeptide is Octanoyltransferase (Azotobacter vinelandii (strain DJ / ATCC BAA-1303)).